The following is a 67-amino-acid chain: Photosystem II reaction center protein H (67 aa).

Residues Gly-27–Leu-47 traverse the membrane as a helical segment.

Belongs to the PsbH family. In terms of assembly, PSII is composed of 1 copy each of membrane proteins PsbA, PsbB, PsbC, PsbD, PsbE, PsbF, PsbH, PsbI, PsbJ, PsbK, PsbL, PsbM, PsbT, PsbX, PsbY, Psb30/Ycf12, peripheral proteins PsbO, CyanoQ (PsbQ), PsbU, PsbV and a large number of cofactors. It forms dimeric complexes.

It localises to the cellular thylakoid membrane. In terms of biological role, one of the components of the core complex of photosystem II (PSII), required for its stability and/or assembly. PSII is a light-driven water:plastoquinone oxidoreductase that uses light energy to abstract electrons from H(2)O, generating O(2) and a proton gradient subsequently used for ATP formation. It consists of a core antenna complex that captures photons, and an electron transfer chain that converts photonic excitation into a charge separation. The polypeptide is Photosystem II reaction center protein H (Prochlorococcus marinus (strain SARG / CCMP1375 / SS120)).